The primary structure comprises 299 residues: Protein bem46 (299 aa).

The helical transmembrane segment at Tyr15–Tyr32 threads the bilayer.

It belongs to the serine esterase family.

It is found in the membrane. Its function is as follows. Suppressor of bem1/bud5. In Schizosaccharomyces pombe (strain 972 / ATCC 24843) (Fission yeast), this protein is Protein bem46 (bem46).